The sequence spans 203 residues: MAEGQVLVLDGRGHLLGRLAAIVAKQVLLGRKVVVVRCEGINISGNFYRNKLKYLAFLRKRMNTNPSRGPYHFRAPSRIFWRTVRGMLPHKTKRGQAALERLKVFDGIPPPYDKKKRMVVPAALKVVRLKPTRKFAYLGRLAHEVGWKYQAVTATLEEKRKEKAKIHYRKKKQLMRLRKQAEKNIEKKIGKFTEVLKTHGFLV.

An N-acetylalanine modification is found at A2. R59 bears the Citrulline mark. Phosphoserine is present on S77. At R140 the chain carries Citrulline. K191 is subject to N6-acetyllysine.

The protein belongs to the universal ribosomal protein uL13 family. As to quaternary structure, component of the 60S ribosome. Component of the GAIT complex. Interacts with EIF4G1. Post-translationally, phosphorylation at Ser-77 upon interferon-gamma treatment in macrophages involves a DAPK1-DAPK3 kinase cascade and is causing release from the ribosome, association with the GAIT complex and subsequent involvement in transcript-selective translation inhibition. In terms of processing, citrullinated by PADI4.

The protein localises to the cytoplasm. Associated with ribosomes but is not required for canonical ribosome function and has extra-ribosomal functions. Component of the GAIT (gamma interferon-activated inhibitor of translation) complex which mediates interferon-gamma-induced transcript-selective translation inhibition in inflammation processes. Upon interferon-gamma activation and subsequent phosphorylation dissociates from the ribosome and assembles into the GAIT complex which binds to stem loop-containing GAIT elements in the 3'-UTR of diverse inflammatory mRNAs (such as ceruplasmin) and suppresses their translation. In the GAIT complex interacts with m7G cap-bound eIF4G at or near the eIF3-binding site and blocks the recruitment of the 43S ribosomal complex. Involved in methylation of rRNA. The sequence is that of Large ribosomal subunit protein uL13 (RPL13A) from Bos taurus (Bovine).